A 515-amino-acid polypeptide reads, in one-letter code: SWI/SNF-related matrix-associated actin-dependent regulator of chromatin subfamily D member 1 (515 aa).

The tract at residues methionine 1–proline 103 is disordered. Residues glycine 14 to glycine 23 are compositionally biased toward gly residues. Residues alanine 43–aspartate 167 form an interaction with ESR1, NR1H4, NR3C1, PGR and SMARCA4 region. Residues arginine 68 and arginine 88 each carry the asymmetric dimethylarginine modification. Lysine 101 participates in a covalent cross-link: Glycyl lysine isopeptide (Lys-Gly) (interchain with G-Cter in SUMO2). The interaction with SMARCC1 and SMARCC2 stretch occupies residues isoleucine 168 to glutamate 474. A necessary for GR/NR3C1-mediated remodeling and transcription from chromatin; required for GR/NR3C1 interaction with the BRG1/SMARCA4 complex in vivo region spans residues arginine 180 to threonine 515. Threonine 203 carries the phosphothreonine modification. At lysine 223 the chain carries N6-acetyllysine. The 78-residue stretch at tyrosine 290 to proline 367 folds into the SWIB/MDM2 domain. Residues alanine 412–phenylalanine 440 are a coiled coil.

The protein belongs to the SMARCD family. Component of the multiprotein chromatin-remodeling complexes SWI/SNF: SWI/SNF-A (BAF), SWI/SNF-B (PBAF) and related complexes. The canonical complex contains a catalytic subunit (either SMARCA4/BRG1/BAF190A or SMARCA2/BRM/BAF190B), and at least SMARCE1, ACTL6A/BAF53, SMARCC1/BAF155, SMARCC2/BAF170, and SMARCB1/SNF5/BAF47. Other subunits specific to each of the complexes may also be present permitting several possible combinations developmentally and tissue specific. Component of the BAF complex, which includes at least actin (ACTB), ARID1A/BAF250A, ARID1B/BAF250B, SMARCA2/BRM, SMARCA4/BRG1/BAF190A, ACTL6A/BAF53, ACTL6B/BAF53B, SMARCE1/BAF57, SMARCC1/BAF155, SMARCC2/BAF170, SMARCB1/SNF5/INI1, and one or more SMARCD1/BAF60A, SMARCD2/BAF60B, or SMARCD3/BAF60C. In muscle cells, the BAF complex also contains DPF3. Component of neural progenitors-specific chromatin remodeling complex (npBAF complex) composed of at least, ARID1A/BAF250A or ARID1B/BAF250B, SMARCD1/BAF60A, SMARCD3/BAF60C, SMARCA2/BRM/BAF190B, SMARCA4/BRG1/BAF190A, SMARCB1/BAF47, SMARCC1/BAF155, SMARCE1/BAF57, SMARCC2/BAF170, PHF10/BAF45A, ACTL6A/BAF53A and actin. Component of neuron-specific chromatin remodeling complex (nBAF complex) composed of at least, ARID1A/BAF250A or ARID1B/BAF250B, SMARCD1/BAF60A, SMARCD3/BAF60C, SMARCA2/BRM/BAF190B, SMARCA4/BRG1/BAF190A, SMARCB1/BAF47, SMARCC1/BAF155, SMARCE1/BAF57, SMARCC2/BAF170, DPF1/BAF45B, DPF3/BAF45C, ACTL6B/BAF53B and actin. Component of the SWI/SNF-B (PBAF) chromatin remodeling complex, at least composed of SMARCA4/BRG1, SMARCB1/BAF47/SNF5, ACTL6A/BAF53A or ACTL6B/BAF53B, SMARCE1/BAF57, SMARCD1/BAF60A, SMARCD2/BAF60B, perhaps SMARCD3/BAF60C, SMARCC1/BAF155, SMARCC2/BAF170, PBRM1/BAF180, ARID2/BAF200 and actin (ACTB). Component of SWI/SNF (GBAF) subcomplex, which includes at least BICRA or BICRAL (mutually exclusive), BRD9, SS18, SMARCA2/BRM, SMARCA4/BRG1/BAF190A, ACTL6A/BAF53, SMARCC1/BAF155, and SMARCD1/BAF60A. Specifically interacts with the VDR heterodimer complex. Interacts with ESR1, NR3C1, NR1H4, PGR, SMARCA4, SMARCC1 and SMARCC2. Interacts with DPF2. Interacts with DPF3a (isoform 2 of DPF3/BAF45C) and with HDGFL2 in a DPF3a-dependent manner. Interacts with FOS, FOSB isoform 1 and 2, FOSL1 and FOSL2. In terms of tissue distribution, expressed in all tissues tested, including brain, heart, kidney, liver, lung, muscle, pancreas and placenta.

Its subcellular location is the nucleus. Its function is as follows. Involved in transcriptional activation and repression of select genes by chromatin remodeling (alteration of DNA-nucleosome topology). Component of SWI/SNF chromatin remodeling complexes that carry out key enzymatic activities, changing chromatin structure by altering DNA-histone contacts within a nucleosome in an ATP-dependent manner. Belongs to the neural progenitors-specific chromatin remodeling complex (npBAF complex) and the neuron-specific chromatin remodeling complex (nBAF complex). During neural development a switch from a stem/progenitor to a postmitotic chromatin remodeling mechanism occurs as neurons exit the cell cycle and become committed to their adult state. The transition from proliferating neural stem/progenitor cells to postmitotic neurons requires a switch in subunit composition of the npBAF and nBAF complexes. As neural progenitors exit mitosis and differentiate into neurons, npBAF complexes which contain ACTL6A/BAF53A and PHF10/BAF45A, are exchanged for homologous alternative ACTL6B/BAF53B and DPF1/BAF45B or DPF3/BAF45C subunits in neuron-specific complexes (nBAF). The npBAF complex is essential for the self-renewal/proliferative capacity of the multipotent neural stem cells. The nBAF complex along with CREST plays a role regulating the activity of genes essential for dendrite growth. Has a strong influence on vitamin D-mediated transcriptional activity from an enhancer vitamin D receptor element (VDRE). May be a link between mammalian SWI-SNF-like chromatin remodeling complexes and the vitamin D receptor (VDR) heterodimer. Mediates critical interactions between nuclear receptors and the BRG1/SMARCA4 chromatin-remodeling complex for transactivation. Interacts with AKIRIN2. The polypeptide is SWI/SNF-related matrix-associated actin-dependent regulator of chromatin subfamily D member 1 (Homo sapiens (Human)).